Reading from the N-terminus, the 348-residue chain is D-alanine--D-alanine ligase (348 aa).

The ATP-grasp domain maps to 132-334 (KRVLESIGIP…YPDLIEELVT (203 aa)). 162–217 (LARLTFPIFVKPANMGSSVGISKAQTKVELRKAIQLALTYDSRVLIEQGVIAREIE) contacts ATP. 3 residues coordinate Mg(2+): aspartate 288, glutamate 301, and asparagine 303.

The protein belongs to the D-alanine--D-alanine ligase family. Mg(2+) serves as cofactor. Mn(2+) is required as a cofactor.

The protein resides in the cytoplasm. The catalysed reaction is 2 D-alanine + ATP = D-alanyl-D-alanine + ADP + phosphate + H(+). The protein operates within cell wall biogenesis; peptidoglycan biosynthesis. In terms of biological role, cell wall formation. The polypeptide is D-alanine--D-alanine ligase (Streptococcus pyogenes serotype M4 (strain MGAS10750)).